We begin with the raw amino-acid sequence, 191 residues long: Fe/S biogenesis protein NfuA (191 aa).

Positions 149 and 152 each coordinate [4Fe-4S] cluster.

Belongs to the NfuA family. In terms of assembly, homodimer. [4Fe-4S] cluster is required as a cofactor.

In terms of biological role, involved in iron-sulfur cluster biogenesis. Binds a 4Fe-4S cluster, can transfer this cluster to apoproteins, and thereby intervenes in the maturation of Fe/S proteins. Could also act as a scaffold/chaperone for damaged Fe/S proteins. This Erwinia tasmaniensis (strain DSM 17950 / CFBP 7177 / CIP 109463 / NCPPB 4357 / Et1/99) protein is Fe/S biogenesis protein NfuA.